Reading from the N-terminus, the 71-residue chain is Disintegrin simusmin (71 aa).

The Disintegrin domain maps to 1 to 71 (AGEECDCGSP…SADCPRNPFH (71 aa)). Disulfide bonds link C5–C20, C7–C15, C14–C37, C28–C34, C33–C58, and C46–C65. The Cell attachment site motif lies at 50–52 (RGD).

The protein belongs to the venom metalloproteinase (M12B) family. P-II subfamily. P-IIa sub-subfamily. In terms of assembly, monomer. In terms of tissue distribution, expressed by the venom gland.

The protein localises to the secreted. Functionally, inhibits ADP- (IC(50)=56 nM) and collagen-induced (IC(50)=49 nM) aggregation of human platelets. In vitro, inhibits adhesion of endothelial cells to vitronectin, type-I collagen and, to a lower degree, fibronectin and laminin. The chain is Disintegrin simusmin from Crotalus simus (Central American rattlesnake).